Reading from the N-terminus, the 488-residue chain is MSQSVESRTRIKSERYESGVIPYAKMGYWDADYVIKETDILALFRITPQPGVDPIEASAAIAGESSTATWTVVWTDLLTACDLYRAKAYRVDPVPNVADQYFAYIAYDIDLFEEGSIANLTASIIGNVFGFKAVKALRLEDMRMPVAYLKTFQGPATGLIVERERMDKFGRPFLGATVKPKLGLSGKNYGRVVYEGLKGGLDFLKDDENINSQPFMRWRERFLYSMEGVNKASAAAGEIKGHYLNVTAATMEDMYERAEFSKVVGSIICMIDLVIGYTAIQSMAIWARKNDMILHLHRAGNSTYSRQKNHGMNFRVICKWMRMAGVDHIHAGTVVGKLEGDPLMIKGFYNTLLAGETEINLPQGLFFAQNWASLRKVVPVASGGIHAGQMHQLLDYLGDDVVLQFGGGTIGHPDGIQAGATANRVALESMVMARNEGRDFVAEGPQILRDAAKTCGPLQTALDLWKDISFNYTSTDTADFVETPTANV.

Positions 127 and 177 each coordinate substrate. K179 acts as the Proton acceptor in catalysis. K181 is a binding site for substrate. Mg(2+)-binding residues include K205, D207, and E208. K205 is subject to N6-carboxylysine. The active-site Proton acceptor is H297. 3 residues coordinate substrate: R298, H330, and S382.

It belongs to the RuBisCO large chain family. Type I subfamily. As to quaternary structure, heterohexadecamer of 8 large chains and 8 small chains. The cofactor is Mg(2+).

Its subcellular location is the plastid. The protein resides in the chloroplast. It catalyses the reaction 2 (2R)-3-phosphoglycerate + 2 H(+) = D-ribulose 1,5-bisphosphate + CO2 + H2O. The enzyme catalyses D-ribulose 1,5-bisphosphate + O2 = 2-phosphoglycolate + (2R)-3-phosphoglycerate + 2 H(+). In terms of biological role, ruBisCO catalyzes two reactions: the carboxylation of D-ribulose 1,5-bisphosphate, the primary event in carbon dioxide fixation, as well as the oxidative fragmentation of the pentose substrate in the photorespiration process. Both reactions occur simultaneously and in competition at the same active site. This is Ribulose bisphosphate carboxylase large chain from Porphyra purpurea (Red seaweed).